A 329-amino-acid chain; its full sequence is Malate dehydrogenase (329 aa).

Residue Gly12–Cys18 coordinates NAD(+). Residues Arg95 and Arg101 each coordinate substrate. Residues Asn108, Gln115, and Val132–Asn134 each bind NAD(+). Substrate-binding residues include Asn134 and Arg165. The Proton acceptor role is filled by His190.

This sequence belongs to the LDH/MDH superfamily. MDH type 2 family. In terms of assembly, homodimer.

It carries out the reaction (S)-malate + NAD(+) = oxaloacetate + NADH + H(+). Catalyzes the reversible oxidation of malate to oxaloacetate. This is Malate dehydrogenase from Aquaspirillum arcticum.